Consider the following 197-residue polypeptide: Pyridoxal 5'-phosphate synthase subunit PdxT (197 aa).

An L-glutamine-binding site is contributed by Gly53 to Ser55. Cys85 (nucleophile) is an active-site residue. Residues Arg114 and Ile142–Arg143 contribute to the L-glutamine site. Residues His179 and Glu181 each act as charge relay system in the active site.

Belongs to the glutaminase PdxT/SNO family. In terms of assembly, in the presence of PdxS, forms a dodecamer of heterodimers. Only shows activity in the heterodimer.

The catalysed reaction is aldehydo-D-ribose 5-phosphate + D-glyceraldehyde 3-phosphate + L-glutamine = pyridoxal 5'-phosphate + L-glutamate + phosphate + 3 H2O + H(+). It carries out the reaction L-glutamine + H2O = L-glutamate + NH4(+). It participates in cofactor biosynthesis; pyridoxal 5'-phosphate biosynthesis. In terms of biological role, catalyzes the hydrolysis of glutamine to glutamate and ammonia as part of the biosynthesis of pyridoxal 5'-phosphate. The resulting ammonia molecule is channeled to the active site of PdxS. In Thermococcus gammatolerans (strain DSM 15229 / JCM 11827 / EJ3), this protein is Pyridoxal 5'-phosphate synthase subunit PdxT.